The primary structure comprises 82 residues: Large ribosomal subunit protein uL23 (82 aa).

Belongs to the universal ribosomal protein uL23 family. As to quaternary structure, part of the 50S ribosomal subunit. Contacts protein L29.

Binds to 23S rRNA. One of the proteins that surrounds the polypeptide exit tunnel on the outside of the ribosome. This is Large ribosomal subunit protein uL23 from Methanosarcina mazei (strain ATCC BAA-159 / DSM 3647 / Goe1 / Go1 / JCM 11833 / OCM 88) (Methanosarcina frisia).